The sequence spans 470 residues: Heparan-sulfate 6-O-sulfotransferase 3 (470 aa).

Residues 1 to 4 (MDER) are Cytoplasmic-facing. A helical; Signal-anchor for type II membrane protein membrane pass occupies residues 5–27 (FNKWLLTPVLTLLFVVIMYQYVS). Residues 28 to 470 (PSCTSSCTNF…EDYNSQVVRW (443 aa)) are Lumenal-facing. A disordered region spans residues 36–121 (NFGEQLRSGE…EAPENGSLPR (86 aa)). Positions 88 to 113 (PEDEDEDPGDPEEEEEEEEEEPDPEA) are enriched in acidic residues. Asn-116 and Asn-127 each carry an N-linked (GlcNAc...) asparagine glycan. 3'-phosphoadenylyl sulfate is bound at residue 151–159 (HIQKTGGTT). Residues 181 to 182 (KK), Arg-198, Trp-203, and His-208 contribute to the substrate site. The active-site Proton acceptor is the His-208. A glycan (N-linked (GlcNAc...) asparagine) is linked at Asn-230. Positions 244 and 252 each coordinate 3'-phosphoadenylyl sulfate. The substrate site is built by His-256 and Trp-263. Asn-323 and Asn-328 each carry an N-linked (GlcNAc...) asparagine glycan. 376 to 378 (TQF) is a binding site for 3'-phosphoadenylyl sulfate. N-linked (GlcNAc...) asparagine glycosylation occurs at Asn-379. Residue 382-383 (RA) coordinates 3'-phosphoadenylyl sulfate. The segment at 421 to 453 (TKQLEHQRDRQKRREERRLQREHRAHRWPKEDR) is disordered. Over residues 422–439 (KQLEHQRDRQKRREERRL) the composition is skewed to basic and acidic residues.

Belongs to the sulfotransferase 6 family. As to expression, ubiquitously expressed.

Its subcellular location is the membrane. It carries out the reaction alpha-D-glucosaminyl-[heparan sulfate](n) + 3'-phosphoadenylyl sulfate = 6-sulfo-alpha-D-glucosaminyl-[heparan sulfate](n) + adenosine 3',5'-bisphosphate + H(+). Its function is as follows. 6-O-sulfation enzyme which catalyzes the transfer of sulfate from 3'-phosphoadenosine 5'-phosphosulfate (PAPS) to position 6 of the N-sulfoglucosamine residue (GlcNS) of heparan sulfate. The sequence is that of Heparan-sulfate 6-O-sulfotransferase 3 (Hs6st3) from Mus musculus (Mouse).